Here is a 257-residue protein sequence, read N- to C-terminus: Folate receptor alpha (257 aa).

The N-terminal stretch at 1-24 (MAQRMTTQLLLLLVWVAVVGEAQT) is a signal peptide. Disulfide bonds link Cys37–Cys65, Cys57–Cys105, Cys66–Cys109, Cys89–Cys175, Cys96–Cys146, Cys135–Cys209, Cys139–Cys189, and Cys152–Cys169. A glycan (N-linked (GlcNAc...) asparagine) is linked at Asn69. Folate contacts are provided by residues Asp103, Tyr107, 124–128 (WRKER), 157–162 (HKGWNW), and Ser196. Asn161 carries an N-linked (GlcNAc...) asparagine glycan. The N-linked (GlcNAc...) asparagine glycan is linked to Asn201. Residue Ser234 is the site of GPI-anchor amidated serine attachment. A propeptide spans 235–257 (GAGPWAAWPFLLSLALMLLWLLS) (removed in mature form).

It belongs to the folate receptor family. Post-translationally, the secreted form is derived from the membrane-bound form either by cleavage of the GPI anchor, or/and by proteolysis catalyzed by a metalloprotease. As to expression, primarily expressed in tissues of epithelial origin. Expression is increased in malignant tissues. Expressed in kidney, lung and cerebellum. Detected in placenta and thymus epithelium.

It is found in the cell membrane. The protein resides in the apical cell membrane. The protein localises to the basolateral cell membrane. Its subcellular location is the secreted. It localises to the cytoplasmic vesicle. It is found in the clathrin-coated vesicle. The protein resides in the endosome. Functionally, binds to folate and reduced folic acid derivatives and mediates delivery of 5-methyltetrahydrofolate and folate analogs into the interior of cells. Has high affinity for folate and folic acid analogs at neutral pH. Exposure to slightly acidic pH after receptor endocytosis triggers a conformation change that strongly reduces its affinity for folates and mediates their release. Required for normal embryonic development and normal cell proliferation. This is Folate receptor alpha (FOLR1) from Homo sapiens (Human).